The sequence spans 56 residues: Endoregulin (56 aa).

Residues 25–45 traverse the membrane as a helical segment; it reads LTVIGLFTSTFLLFVLFAVVF.

Homooligomer. Can also form heterooligomers with other sarcoplasmic/endoplasmic reticulum calcium ATPase (SERCA) regulators ARLN, PLN, SLN and STRIT1/DWORF. Monomer. Interacts as a monomer with ATP2A2/SERCA2; the interaction results in inhibition of ATP2A2 Ca(2+) affinity. Largely expressed in non-muscle tissues with the exception of weak expression in body wall muscles at 14.5 dpc. Expressed in epithelial cells of the trachea, bronchus, lung, intestine, pancreas, and liver.

The protein resides in the endoplasmic reticulum membrane. Inhibits the activity of the calcium ATPases ATP2A2/SERCA2 and ATP2A3/SERCA3 by decreasing their apparent affinity for Ca(2+). In Mus musculus (Mouse), this protein is Endoregulin (Erln).